We begin with the raw amino-acid sequence, 654 residues long: Probable Xaa-Pro aminopeptidase P (654 aa).

Mn(2+) contacts are provided by Asp-449, Asp-460, Glu-558, and Glu-572.

Belongs to the peptidase M24B family. Requires Mn(2+) as cofactor.

The catalysed reaction is Release of any N-terminal amino acid, including proline, that is linked to proline, even from a dipeptide or tripeptide.. Functionally, catalyzes the removal of a penultimate prolyl residue from the N-termini of peptides. The chain is Probable Xaa-Pro aminopeptidase P (ampp) from Neosartorya fischeri (strain ATCC 1020 / DSM 3700 / CBS 544.65 / FGSC A1164 / JCM 1740 / NRRL 181 / WB 181) (Aspergillus fischerianus).